The following is a 97-amino-acid chain: Large ribosomal subunit protein bL28 (97 aa).

This sequence belongs to the bacterial ribosomal protein bL28 family.

This Rickettsia prowazekii (strain Madrid E) protein is Large ribosomal subunit protein bL28.